The primary structure comprises 196 residues: Probable malonic semialdehyde reductase RutE (196 aa).

It belongs to the nitroreductase family. HadB/RutE subfamily. The cofactor is FMN.

It catalyses the reaction 3-hydroxypropanoate + NADP(+) = 3-oxopropanoate + NADPH + H(+). Functionally, may reduce toxic product malonic semialdehyde to 3-hydroxypropionic acid, which is excreted. This Shigella sonnei (strain Ss046) protein is Probable malonic semialdehyde reductase RutE.